Here is a 78-residue protein sequence, read N- to C-terminus: Defensin-like protein 173 (78 aa).

An N-terminal signal peptide occupies residues 1 to 23; that stretch reads MAKAPSPLVFPIIFLIIFALVEP. 4 cysteine pairs are disulfide-bonded: Cys-27–Cys-71, Cys-34–Cys-56, Cys-40–Cys-65, and Cys-44–Cys-67.

Belongs to the DEFL family.

Its subcellular location is the secreted. The chain is Defensin-like protein 173 (LCR63) from Arabidopsis thaliana (Mouse-ear cress).